Consider the following 229-residue polypeptide: Heptaprenylglyceryl phosphate synthase (229 aa).

Lys12 serves as a coordination point for sn-glycerol 1-phosphate. Positions 14 and 40 each coordinate Mg(2+). Sn-glycerol 1-phosphate is bound by residues 159-164, Gly189, and 209-210; these read YIEYSG and GN.

Belongs to the GGGP/HepGP synthase family. Group I subfamily. In terms of assembly, homodimer. It depends on Mg(2+) as a cofactor.

The catalysed reaction is sn-glycerol 1-phosphate + all-trans-heptaprenyl diphosphate = 3-heptaprenyl-sn-glycero-1-phosphate + diphosphate. The protein operates within membrane lipid metabolism; glycerophospholipid metabolism. Its function is as follows. Prenyltransferase that catalyzes in vivo the transfer of the heptaprenyl moiety of heptaprenyl pyrophosphate (HepPP; 35 carbon atoms) to the C3 hydroxyl of sn-glycerol-1-phosphate (G1P), producing heptaprenylglyceryl phosphate (HepGP). This reaction is an ether-bond-formation step in the biosynthesis of archaea-type G1P-based membrane lipids found in Bacillales. This Oceanobacillus iheyensis (strain DSM 14371 / CIP 107618 / JCM 11309 / KCTC 3954 / HTE831) protein is Heptaprenylglyceryl phosphate synthase.